The primary structure comprises 110 residues: UPF0060 membrane protein Bpet0062 (110 aa).

The next 4 helical transmembrane spans lie at 7-27 (LGLF…PYLW), 33-53 (SAWL…LLTL), 63-83 (AAYG…VDGV), and 86-106 (ATTD…IMAG).

The protein belongs to the UPF0060 family.

Its subcellular location is the cell inner membrane. This is UPF0060 membrane protein Bpet0062 from Bordetella petrii (strain ATCC BAA-461 / DSM 12804 / CCUG 43448).